The following is a 906-amino-acid chain: Envelope glycoprotein B (906 aa).

Positions 1-31 (MESRIWCLVVCVNLCIVCLGAAVSSSSTSHA) are cleaved as a signal peptide. Positions 29 to 46 (SHATSSTHNGSHTSRTTS) are enriched in low complexity. Residues 29–51 (SHATSSTHNGSHTSRTTSAQTRS) form a disordered region. Residues 32 to 750 (TSSTHNGSHT…EGVATFLKNP (719 aa)) lie on the Virion surface side of the membrane. N-linked (GlcNAc...) asparagine; by host glycosylation is found at Asn-37, Asn-68, Asn-73, and Asn-85. Disulfide bonds link Cys-94-Cys-550, Cys-111-Cys-506, Cys-185-Cys-250, Cys-246-Cys-250, and Cys-344-Cys-391. The segment at 152–158 (SYAYIYT) is involved in fusion and/or binding to host membrane. The N-linked (GlcNAc...) asparagine; by host glycan is linked to Asn-208. Residues 237–244 (GSTWLYRE) are involved in fusion and/or binding to host membrane. N-linked (GlcNAc...) asparagine; by host glycans are attached at residues Asn-281, Asn-286, Asn-302, Asn-341, Asn-383, Asn-405, Asn-409, Asn-417, Asn-447, Asn-452, Asn-464, Asn-465, Asn-554, and Asn-585. Residues Cys-573 and Cys-610 are joined by a disulfide bond. 2 hydrophobic membrane proximal region regions span residues 696-748 (VEDK…TFLK) and 727-747 (VAIG…ATFL). Residues 751 to 771 (FGAFTIILVAIAVVIITYLIY) form a helical membrane-spanning segment. The Intravirion segment spans residues 772–906 (TRQRRLCTQP…LKDSDEEENV (135 aa)). 2 stretches are compositionally biased toward polar residues: residues 797-809 (VTSG…SLQA) and 859-876 (RAQQ…GTQD). Disordered regions lie at residues 797 to 837 (VTSG…TAAP) and 856 to 906 (AEQR…EENV). The segment covering 877–886 (KGQKPNLLDR) has biased composition (basic and acidic residues). An Internalization motif motif is present at residues 894 to 897 (YRHL).

Belongs to the herpesviridae glycoprotein B family. In terms of assembly, homotrimer; disulfide-linked. Binds to heparan sulfate proteoglycans. Interacts with gH/gL heterodimer. Interacts with host TLR1 and TLR2. Interacts with host C-type lectin CD209/DC-SIGN. Interacts with host ITGB1, EGFR, and PDGFRA. Post-translationally, a proteolytic cleavage by host furin generates two subunits that remain linked by disulfide bonds.

Its subcellular location is the virion membrane. The protein resides in the host cell membrane. It is found in the host endosome membrane. The protein localises to the host Golgi apparatus membrane. In terms of biological role, envelope glycoprotein that plays a role in host cell entry, cell to-cell virus transmission, and fusion of infected cells. May be involved in the initial attachment via binding to heparan sulfate together with the gM/gN complex that binds heparin with higher affinity. Interacts with host integrin ITGB1, PDGFRA and EGFR that likely serve as postattachment entry receptors. Also participates in the fusion of viral and cellular membranes leading to virus entry into the host cell. Membrane fusion is mediated by the fusion machinery composed at least of gB and the heterodimer gH/gL. This is Envelope glycoprotein B from Human cytomegalovirus (strain AD169) (HHV-5).